We begin with the raw amino-acid sequence, 458 residues long: tRNA modification GTPase MnmE (458 aa).

Arg-26, Glu-88, and Arg-127 together coordinate (6S)-5-formyl-5,6,7,8-tetrahydrofolate. Positions 224–378 (GLSTAIIGRP…IEERINDIFF (155 aa)) constitute a TrmE-type G domain. Asn-234 is a binding site for K(+). GTP is bound by residues 234-239 (NVGKSS), 253-259 (TDIEGTT), and 278-281 (DTAG). Mg(2+) is bound at residue Ser-238. The K(+) site is built by Thr-253, Ile-255, and Thr-258. Residue Thr-259 participates in Mg(2+) binding. Residue Lys-458 coordinates (6S)-5-formyl-5,6,7,8-tetrahydrofolate.

This sequence belongs to the TRAFAC class TrmE-Era-EngA-EngB-Septin-like GTPase superfamily. TrmE GTPase family. As to quaternary structure, homodimer. Heterotetramer of two MnmE and two MnmG subunits. It depends on K(+) as a cofactor.

It is found in the cytoplasm. In terms of biological role, exhibits a very high intrinsic GTPase hydrolysis rate. Involved in the addition of a carboxymethylaminomethyl (cmnm) group at the wobble position (U34) of certain tRNAs, forming tRNA-cmnm(5)s(2)U34. The sequence is that of tRNA modification GTPase MnmE from Streptococcus agalactiae serotype Ia (strain ATCC 27591 / A909 / CDC SS700).